Here is a 124-residue protein sequence, read N- to C-terminus: Fluoride-specific ion channel FluC 1 (124 aa).

4 helical membrane-spanning segments follow: residues 7-27 (IQSKQLYKIFLLIVGSILGAI), 32-52 (LNNYFWVNISGAALLGLIVGL), 58-78 (IQFFLVIGFCGSFTTFSGWIL), and 93-113 (AGLICSNLLGGFTALSVTFWI). Na(+) is bound by residues G68 and T71.

It belongs to the fluoride channel Fluc/FEX (TC 1.A.43) family.

The protein localises to the cell inner membrane. The enzyme catalyses fluoride(in) = fluoride(out). With respect to regulation, na(+) is not transported, but it plays an essential structural role and its presence is essential for fluoride channel function. Functionally, fluoride-specific ion channel. Important for reducing fluoride concentration in the cell, thus reducing its toxicity. This chain is Fluoride-specific ion channel FluC 1, found in Prochlorococcus marinus (strain SARG / CCMP1375 / SS120).